Here is a 435-residue protein sequence, read N- to C-terminus: Tol-Pal system protein TolB (435 aa).

Positions 1–28 are cleaved as a signal peptide; it reads MVKCSLIRALMVIAGLIGAAAFTTPANA. The segment at 288–310 is disordered; the sequence is STAAIDTSPSYSPDGARVSFESD.

It belongs to the TolB family. The Tol-Pal system is composed of five core proteins: the inner membrane proteins TolA, TolQ and TolR, the periplasmic protein TolB and the outer membrane protein Pal. They form a network linking the inner and outer membranes and the peptidoglycan layer.

Its subcellular location is the periplasm. Part of the Tol-Pal system, which plays a role in outer membrane invagination during cell division and is important for maintaining outer membrane integrity. The protein is Tol-Pal system protein TolB of Rhizobium leguminosarum bv. trifolii (strain WSM2304).